The sequence spans 971 residues: Oncostatin-M-specific receptor subunit beta (971 aa).

The N-terminal stretch at 1–23 (MAFSVVLHPAFLLAVLSLRASRS) is a signal peptide. Residues 24 to 737 (EVLEEPLPLT…VTTPDARSHM (714 aa)) are Extracellular-facing. N-linked (GlcNAc...) asparagine glycans are attached at residues asparagine 74, asparagine 97, asparagine 130, asparagine 162, and asparagine 239. An intrachain disulfide couples cysteine 242 to cysteine 252. N-linked (GlcNAc...) asparagine glycosylation is found at asparagine 271, asparagine 304, asparagine 323, and asparagine 377. Fibronectin type-III domains follow at residues 332 to 425 (APQD…TPET), 427 to 523 (PSQA…SNDS), 524 to 620 (GHEE…TQEL), and 622 to 733 (PLVN…TPDA). Residues 412-416 (WSDWT) carry the WSXWS motif motif. N-linked (GlcNAc...) asparagine glycans are attached at residues asparagine 491, asparagine 541, asparagine 577, asparagine 689, and asparagine 722. Residues 738 to 758 (LLQIILPMTLCVLLSIIVCYW) traverse the membrane as a helical segment. Residues 759 to 971 (KSQWVKEKCY…STVLLGQGEQ (213 aa)) are Cytoplasmic-facing. The short motif at 767–775 (CYPDIPNPY) is the Box 1 motif element. Residues 949-971 (LASPSLKEDNSLTSTVLLGQGEQ) are disordered. The span at 959-971 (SLTSTVLLGQGEQ) shows a compositional bias: polar residues.

This sequence belongs to the type I cytokine receptor family. Type 2 subfamily. Heterodimer composed of OSMR and IL6ST (type II OSM receptor). Heterodimer with IL31RA to form the IL31 receptor. As to expression, widely expressed. Expressed at highest levels in the lung, heart, thymus and spleen. Expressed in dorsal root ganglia.

Its subcellular location is the membrane. Its function is as follows. Associates with IL31RA to form the IL31 receptor. Binds IL31 to activate STAT3 and possibly STAT1 and STAT5. Capable of transducing OSM-specific signaling events. The protein is Oncostatin-M-specific receptor subunit beta (Osmr) of Mus musculus (Mouse).